The chain runs to 494 residues: Glutamyl-tRNA(Gln) amidotransferase subunit A (494 aa).

Catalysis depends on charge relay system residues Lys-78 and Ser-158. The active-site Acyl-ester intermediate is Ser-182.

Belongs to the amidase family. GatA subfamily. In terms of assembly, heterotrimer of A, B and C subunits.

It catalyses the reaction L-glutamyl-tRNA(Gln) + L-glutamine + ATP + H2O = L-glutaminyl-tRNA(Gln) + L-glutamate + ADP + phosphate + H(+). Allows the formation of correctly charged Gln-tRNA(Gln) through the transamidation of misacylated Glu-tRNA(Gln) in organisms which lack glutaminyl-tRNA synthetase. The reaction takes place in the presence of glutamine and ATP through an activated gamma-phospho-Glu-tRNA(Gln). The chain is Glutamyl-tRNA(Gln) amidotransferase subunit A from Jannaschia sp. (strain CCS1).